The sequence spans 290 residues: Protein MGF 110-9L (290 aa).

A signal peptide spans 1 to 19 (MKVIVLLLVLAVMQPVIQS). The stretch at 1-160 (MKVIVLLLVL…QYSRMRMQAA (160 aa)) is one A repeat. Transmembrane regions (helical) follow at residues 128–148 (VENI…IGYV) and 163–183 (LLIF…IIMN). Residues 161-290 (TRLLIFLGLY…KRHVINQDDL (130 aa)) form a B repeat.

This sequence belongs to the asfivirus MGF 110 family.

The protein resides in the membrane. In Ornithodoros (relapsing fever ticks), this protein is Protein MGF 110-9L.